Here is a 417-residue protein sequence, read N- to C-terminus: NADH-quinone oxidoreductase subunit D (417 aa).

Belongs to the complex I 49 kDa subunit family. In terms of assembly, NDH-1 is composed of 14 different subunits. Subunits NuoB, C, D, E, F, and G constitute the peripheral sector of the complex.

It localises to the cell inner membrane. It carries out the reaction a quinone + NADH + 5 H(+)(in) = a quinol + NAD(+) + 4 H(+)(out). Functionally, NDH-1 shuttles electrons from NADH, via FMN and iron-sulfur (Fe-S) centers, to quinones in the respiratory chain. The immediate electron acceptor for the enzyme in this species is believed to be ubiquinone. Couples the redox reaction to proton translocation (for every two electrons transferred, four hydrogen ions are translocated across the cytoplasmic membrane), and thus conserves the redox energy in a proton gradient. The polypeptide is NADH-quinone oxidoreductase subunit D (Burkholderia thailandensis (strain ATCC 700388 / DSM 13276 / CCUG 48851 / CIP 106301 / E264)).